A 721-amino-acid chain; its full sequence is Kinesin-like protein KIF2C (721 aa).

The segment at 1–250 (MESLHARLFP…CSPLTVTDPI (250 aa)) is globular. Residues Ser3 and Ser19 each carry the phosphoserine modification. Ser92 is modified (phosphoserine; by AURKB). Residues 95-98 (SKIP) carry the Microtubule tip localization signal motif. Residues Ser106, Ser108, Ser112, Ser162, Ser171, Ser183, and Ser188 each carry the phosphoserine modification. Residues 164-188 (EAEEQAHSTRSTSSANPGNSVRRKS) form a disordered region. Over residues 171–182 (STRSTSSANPGN) the composition is skewed to polar residues. Residues 203–234 (EKRAQNSELRIKRAQEYDSSFPNWEFARMIKE) are negative regulator of microtubule-binding. A Kinesin motor domain is found at 254–584 (RICVCVRKRP…LRYADRVKEL (331 aa)). Residues Arg260 and 344 to 351 (GQTGSGKT) contribute to the ATP site. Phosphoserine is present on residues Ser515 and Ser626. The stretch at 614–652 (GNEEEELSSQMSSFNEAMTQIRELEERALEELREIIQQG) forms a coiled coil.

Belongs to the TRAFAC class myosin-kinesin ATPase superfamily. Kinesin family. MCAK/KIF2 subfamily. As to quaternary structure, interacts with CENPH. Interacts with MTUS2/TIP150; the interaction is direct. Interacts with MAPRE1; the interaction is direct, regulated by phosphorylation and is probably required for targeting to growing microtubule plus ends. Interacts with KIF18B at microtubule tips; this interaction increases the affinity of both partners for microtubule plus ends and is required for robust microtubule depolymerization. Phosphorylation by AURKA or AURKB strongly reduces KIF18B-binding. Post-translationally, phosphorylation by AURKB, regulates association with centromeres and kinetochores and the microtubule depolymerization activity. In terms of processing, ubiquitinated.

The protein resides in the cytoplasm. The protein localises to the cytoskeleton. It localises to the nucleus. It is found in the chromosome. Its subcellular location is the centromere. The protein resides in the kinetochore. Its function is as follows. In complex with KIF18B, constitutes the major microtubule plus-end depolymerizing activity in mitotic cells. Regulates the turnover of microtubules at the kinetochore and functions in chromosome segregation during mitosis. Plays a role in chromosome congression and is required for the lateral to end-on conversion of the chromosome-microtubule attachment. The chain is Kinesin-like protein KIF2C (Kif2c) from Mus musculus (Mouse).